The sequence spans 142 residues: ATP synthase epsilon chain (142 aa).

It belongs to the ATPase epsilon chain family. In terms of assembly, F-type ATPases have 2 components, CF(1) - the catalytic core - and CF(0) - the membrane proton channel. CF(1) has five subunits: alpha(3), beta(3), gamma(1), delta(1), epsilon(1). CF(0) has three main subunits: a, b and c.

It is found in the cell inner membrane. Produces ATP from ADP in the presence of a proton gradient across the membrane. The chain is ATP synthase epsilon chain from Shewanella woodyi (strain ATCC 51908 / MS32).